A 508-amino-acid chain; its full sequence is Maturase K (508 aa).

This sequence belongs to the intron maturase 2 family. MatK subfamily.

The protein localises to the plastid. It is found in the chloroplast. Its function is as follows. Usually encoded in the trnK tRNA gene intron. Probably assists in splicing its own and other chloroplast group II introns. In Chaetosphaeridium globosum (Charophycean green alga), this protein is Maturase K.